A 449-amino-acid chain; its full sequence is MLNYTGLENKNVLVVGLAKSGYEAAKLLSKLGANVTVNDGKDLSQDAHAKDLESMGISVVSGSHPLTLLDNNPIIVKNPGIPYTVSIIDEAVKRGLKILTEVELSYLISEAPIIAVTGTNGKTTVTSLIGDMFKKSRLTGRLSGNIGYVASKVAQEVKPTDYLVTELSSFQLLGIEKYKPHIAIITNIYSAHLDYHENLENYQNAKKQIYKNQTEEDYLICNYHQRQVIESEELKAKTLYFSTQQEVDGIYIKDGFIVYKGVRIINTEDLVLPGEHNLENILAAVLACILAGVPIKAIIDSLTTFSGIEHRLQYVGTNRTNKYYNDSKATNTLATQFALNSFNQPIIWLCGGLDRGNEFDELIPYMENVRAMVVFGQTKAKFAKLGNSQGKSVIEANNVEDAVDKVQDIIEPNDVVLLSPACASWDQYSTFEERGEKFIERFRAHLPSY.

118 to 124 (GTNGKTT) provides a ligand contact to ATP.

Belongs to the MurCDEF family.

It localises to the cytoplasm. The catalysed reaction is UDP-N-acetyl-alpha-D-muramoyl-L-alanine + D-glutamate + ATP = UDP-N-acetyl-alpha-D-muramoyl-L-alanyl-D-glutamate + ADP + phosphate + H(+). It functions in the pathway cell wall biogenesis; peptidoglycan biosynthesis. Functionally, cell wall formation. Catalyzes the addition of glutamate to the nucleotide precursor UDP-N-acetylmuramoyl-L-alanine (UMA). This Staphylococcus aureus (strain Mu3 / ATCC 700698) protein is UDP-N-acetylmuramoylalanine--D-glutamate ligase.